A 171-amino-acid polypeptide reads, in one-letter code: ATP synthase subunit b (171 aa).

The helical transmembrane segment at valine 2–leucine 22 threads the bilayer.

Belongs to the ATPase B chain family. In terms of assembly, F-type ATPases have 2 components, F(1) - the catalytic core - and F(0) - the membrane proton channel. F(1) has five subunits: alpha(3), beta(3), gamma(1), delta(1), epsilon(1). F(0) has three main subunits: a(1), b(2) and c(10-14). The alpha and beta chains form an alternating ring which encloses part of the gamma chain. F(1) is attached to F(0) by a central stalk formed by the gamma and epsilon chains, while a peripheral stalk is formed by the delta and b chains.

It is found in the cell inner membrane. In terms of biological role, f(1)F(0) ATP synthase produces ATP from ADP in the presence of a proton or sodium gradient. F-type ATPases consist of two structural domains, F(1) containing the extramembraneous catalytic core and F(0) containing the membrane proton channel, linked together by a central stalk and a peripheral stalk. During catalysis, ATP synthesis in the catalytic domain of F(1) is coupled via a rotary mechanism of the central stalk subunits to proton translocation. Component of the F(0) channel, it forms part of the peripheral stalk, linking F(1) to F(0). The sequence is that of ATP synthase subunit b from Helicobacter acinonychis (strain Sheeba).